Here is a 429-residue protein sequence, read N- to C-terminus: Tryptophan synthase beta chain 2 (429 aa).

The disordered stretch occupies residues 18–40 (NINPDLPSPLPEPKNPEGGKNIE). The residue at position 110 (lysine 110) is an N6-(pyridoxal phosphate)lysine.

This sequence belongs to the TrpB family. Tetramer of two alpha and two beta chains. Requires pyridoxal 5'-phosphate as cofactor.

The enzyme catalyses (1S,2R)-1-C-(indol-3-yl)glycerol 3-phosphate + L-serine = D-glyceraldehyde 3-phosphate + L-tryptophan + H2O. It functions in the pathway amino-acid biosynthesis; L-tryptophan biosynthesis; L-tryptophan from chorismate: step 5/5. The beta subunit is responsible for the synthesis of L-tryptophan from indole and L-serine. This Methanothermobacter thermautotrophicus (strain ATCC 29096 / DSM 1053 / JCM 10044 / NBRC 100330 / Delta H) (Methanobacterium thermoautotrophicum) protein is Tryptophan synthase beta chain 2 (trpB2).